The chain runs to 490 residues: Argininosuccinate lyase (490 aa).

It belongs to the lyase 1 family. Argininosuccinate lyase subfamily.

The protein localises to the cytoplasm. It catalyses the reaction 2-(N(omega)-L-arginino)succinate = fumarate + L-arginine. The protein operates within amino-acid biosynthesis; L-arginine biosynthesis; L-arginine from L-ornithine and carbamoyl phosphate: step 3/3. The protein is Argininosuccinate lyase of Bifidobacterium longum (strain DJO10A).